The sequence spans 357 residues: UDP-N-acetylglucosamine--N-acetylmuramyl-(pentapeptide) pyrophosphoryl-undecaprenol N-acetylglucosamine transferase (357 aa).

UDP-N-acetyl-alpha-D-glucosamine-binding positions include 12-14 (TGG), Asn124, Arg163, Ser189, Ile243, 262-267 (ALTVSE), and Gln288.

It belongs to the glycosyltransferase 28 family. MurG subfamily.

Its subcellular location is the cell inner membrane. The catalysed reaction is di-trans,octa-cis-undecaprenyl diphospho-N-acetyl-alpha-D-muramoyl-L-alanyl-D-glutamyl-meso-2,6-diaminopimeloyl-D-alanyl-D-alanine + UDP-N-acetyl-alpha-D-glucosamine = di-trans,octa-cis-undecaprenyl diphospho-[N-acetyl-alpha-D-glucosaminyl-(1-&gt;4)]-N-acetyl-alpha-D-muramoyl-L-alanyl-D-glutamyl-meso-2,6-diaminopimeloyl-D-alanyl-D-alanine + UDP + H(+). It participates in cell wall biogenesis; peptidoglycan biosynthesis. Functionally, cell wall formation. Catalyzes the transfer of a GlcNAc subunit on undecaprenyl-pyrophosphoryl-MurNAc-pentapeptide (lipid intermediate I) to form undecaprenyl-pyrophosphoryl-MurNAc-(pentapeptide)GlcNAc (lipid intermediate II). This Pseudomonas aeruginosa (strain LESB58) protein is UDP-N-acetylglucosamine--N-acetylmuramyl-(pentapeptide) pyrophosphoryl-undecaprenol N-acetylglucosamine transferase.